The sequence spans 462 residues: Fez family zinc finger protein 1 (462 aa).

Positions 34-49 (PLAFSIERIMSRTPEP) match the Engrailed homology 1 repressor motif. 6 consecutive C2H2-type zinc fingers follow at residues 260–282 (FTCE…MPVH), 288–310 (FVCK…KIIH), 316–338 (HKCN…TRIH), 344–366 (FVCE…KLTH), 372–394 (FKCN…MHTH), and 400–423 (FTCP…RKLH). A disordered region spans residues 441–462 (LLLPNREPSPTIQSPQLQKSGY). Polar residues predominate over residues 448-462 (PSPTIQSPQLQKSGY).

Belongs to the krueppel C2H2-type zinc-finger protein family.

It localises to the nucleus. In terms of biological role, transcription repressor. Involved in the development of the forebrain region. The polypeptide is Fez family zinc finger protein 1 (fezf1) (Xenopus tropicalis (Western clawed frog)).